The primary structure comprises 3390 residues: MSEKTQTFVQNETHVLDMTSDFKSDLSLEKVTSSVEQTDDLVSKIINNNDLDIKDLSFLRNLLLSTLQYLGIAKFVAINITLSILSILMLLINSCAKFTRIVNLSSHILNIITTLGLYFQVSSMEIEEITQTFENEFGTYDDDKILSHYIKICNLPNRKDVYEYISLNDLKYKIKLPDISFYELKNDILSKNKNLHLWIFQKFTDEFLAMWFGVQPYRISNLREMLVISRQGFIPKDLFNEIRKLCNMGVSVIISFIQSKLFDEPFKKRDCTQALKDASVISSPFDTLWNLISKQVCDNSAEERFTQTILDFTSEFDNFLGIPNYKFAKNQKLVNTISKSLDACAKFIRDCPKDKQTEIFPLQGLHTATVKRRNEILTNVMPKFARQEPFVVLFQGPGGIGKTHLVQQLATKCVNSFYQDHEDDYIEISPDDKYWPPLSGQRVAFFDEAGNLNDLTEDLLFRNIKSICSPAYFNCAAADIEHKISPCPFELVFATVNTDLDTLQSKISSTFGQASVFPIWRRCIVVECSWNEKELGPFNYKNPSGHRSDYSHITMNYMSYDDKTQKLALEKEINFDTLFDMIRLRFRKKQQEHDTKISILNNEIQRQSNSKQHFSVCLYGEPGQGKTYNLNKLITTFANATNLKIGSEEKPSIHIFDDYIKDENDENCSKFMDIYNNKLPNNSVIFSATNVYPKTHFFPTFFLTNLIYAFIQPFKQVGLYRRLGFDGYTDIPNSSVNAPIFVQNFKFYERKQHICYFLSLEFLKNIICYIFFFLYFPLKFIKKIDLIEIKDVNKYVYDRYINFLSLSKQIEIVEYPPNLENVEFDFRFNMNKFHRVSFNNPFELDKYIHFNKNSYENLLHFDWKMYLSPRVKHRLALSYEKFFITISEVNKEIIIEELKRYVLLFKQFNIDPNMEINLGEYGSFYYINGKIHLMTINIESNVSEIPVFTDGDYVYISEHKIPVIDLFDNININSKYNLSFDQSIALNSFKTGDSFYSNAKVRKSLSKFVLLNYQTKFKLYLKEAKDKVKNFIETPIGHLLSILLTIFVICYASFKIYSKFSNFFSKDQAIEDQRKGEKKIKKITNYDSDGVQPQRKGEKKIKKVTNYDSDGVQPQSNVKVEEEIKLVFDPTGQKLLFGNDFTSELETLVELEKDDEEFTKSKIDNKSMAGLRREVRRRRYARSKKAQIEKQEVLTLPDVNGFEGGKPYFQIAEEKARKNLCQIYMIANNENCIASKFSDHIVCYGLFVFKKRLASVGHIVEALKCAPGYNLYAGCDQFNGKLYKMNLVRNYRKRELSVWDVDCPNDFVDLTSFFIPKEELYDAENCNTVLGRFGMNKREVYLYGNCEFIQEFFKVDNKGAQEFGYIDWATVDITLTTGGDCGLPYYICERKKFHNKIMGLHFAGNNVNHKTIGMSALIYKEDLVVWKGAERQSKCKFCDVKDIIIAQPDIPKEKYKGYNHEIVWNSLHESSPTTLNEELEHYLNIFPKFTGTIIKHSGDKFYGSVKHSHTQFISKFKTELTVTNGWKLSTAGDCQFESNHISPNTEVMYRVVDVQFNSIFKAFKSQPYIKNFRLIANVYEKDGKQRVTILTIIPVSDFNVKQQTVRQALVPLHLNEDEEVYVTEDVSDIFKTAIKRKQRGILPDVPYETVENETVEILGITHRNMTPEPAQMYKPTPFYKLALKFNLDHKLPVNFNMKDCPQEQKDMMVLDRLGQPNPRITQSLKWAHKDYSPDYELRKYVKEQYMCNIMEYYAGCNLLTEEQILKGYGPNHRLYGALGGMEIDSSIGWTMKELYRVTKKSDVINLDSNGNYSFLNNEAAQYTQELLKISMEQAHNGQRYYTAFNELMKMEKLKPSKNFIPRTFTAQDLNGVLMERWILGEFTARALAWDENCAVGCNPYATFHKFATKFFKFKNFFSCDYKNFDRTIPKCVFEDFRDMLIQANPHMKNEIYACFQTIIDRIQVSGNSILLVHGGMPSGCVPTAPLNSKVNDIMIYTAYVNILRRADRGDITSYRYYRDLVCRLFYGDDVIIAVDDSIADIFNCQTLSEEMKILFGMNMTDGSKSDIIPKFETIETLSFISRFFRPLKHQENFIVGALKKISIQTHFYYATDDTPEHFGQVFKTIQEEAALWEEEYFNKIQSYIQEIIRKFPEISKFFNFESYKSIQKRYIMNGWNEFVKLEKLDLNLNKKKSSKVTGIHSKQYSKFLKFLSRIENEKAALEGNFNKESVNTWYFKMSKAMHLNEIFQKGLISKPLAEFYFNEGQKMWDCNITFRRSKDDLPFTFSGSGTTKACAREQAAEEALVLFSQEDEIVRQINDIQSDCKFCKKMIRYKKLLSGVSIQRQMNVSKITENHVPSAGMMATDPSVAPDSGIATNTQTPSISRVLNPIARALDNPAGTGAPFDKHTYVYNVFTRWPEMSTVVNKSLAAGAEVFKISLDPNKLPKRILQYIQFHKTIIPQIEVQILIGGAAGTVGWLKVGWVPDASTAKKYSLDDLQLVASETINLNSTITMSMIINDSRRNGMFRLTKSDPEPWPGIVCLVEHPITNVQRNDDVNYPVIVSVRLGPDCQLMQPYNDLNLSGGTDPDPDPEPDPDPEPGPDPEPGVDELDLSKYIPNQLIDLLICNSYVPNNVSVDFLSTYPNLNFSIHNITDVVVSSKPYTLALFETESQINSASVWRGDLTQLSVFIQYKFYTRVEAYNKVTTVHTDKWTPNFDGTVYKPVDVKIEHAYGTYELTTMWLTSYGLVMEWSLDESRVFYGTYKTDSNGRRWLIDGNTPIARSDHCFIVSSPDLLSDDKAYYNNPIGAKQGGKLVDGAQIYRIFKTESGGYRSDPFVPETYWPSETPYNADWSGVKMPYQIRKVIQTGNNLAGKHLDGDLKMCAMIRQGSSSTQSTDNYFYPIYVHNFSALLKQMNLILKERKTKYIKFDLQVGGKPFAQMGFGDGAFIGRTTMFRQIRAAITNVILLKNIVGVDDLSGLQALPTSGFADWVVKAQSTNSKFLNDFYNDKISIERQASLGIAAAIGAGQGLFGGLSAQWQWQQQADWSRQMQRERLDMMEKLANINNQARLNQLTQSGAQQRITQQAAYQQQMNALGAGSVSAQNGMYTPSNYTPLPSYKSNTTNYYNNSVYHTDNNITNNPSNTSLTNNINNFNPELFQQQRERMPTPSEAYDNSKGFVPQPGTSKSIATENINPNYKDEEHIYEPIEQQNHEYADIDYNAMNISRENKNSSNFGNVGILDHQYADIDYDAMKIARDQQNSSKFGNVGVLNHQYAELDFSKNNTRKNSQILDNSLYSKTQPSSKMIDNSLYGINPNKMVENQNYEPASMERKNSIYSSNLNSSNNLKFNNIPNFKGPTNLNISGAKPAGFGSGIIQPAINKYTDFSKPN.

The SF3 helicase domain occupies 369 to 543 (TVKRRNEILT…ELGPFNYKNP (175 aa)). 396-403 (GPGGIGKT) provides a ligand contact to ATP. The 218-residue stretch at 1206 to 1423 (KPYFQIAEEK…MSALIYKEDL (218 aa)) folds into the Peptidase C3 domain. Catalysis depends on for 3C-like protease activity residues His1258, Glu1295, and Cys1381. The RdRp catalytic domain maps to 1914–2042 (KNFFSCDYKN…AVDDSIADIF (129 aa)). Met2346 is modified (N-acetylmethionine; by host). 2 disordered regions span residues 2576-2609 (YNDLNLSGGTDPDPDPEPDPDPEPGPDPEPGVDE) and 3168-3190 (TPSEAYDNSKGFVPQPGTSKSIA). The span at 2587–2609 (PDPDPEPDPDPEPGPDPEPGVDE) shows a compositional bias: acidic residues.

N-acetylated. In terms of processing, proteolytic cleavages of the polyprotein yield mature proteins.

The protein localises to the virion. The enzyme catalyses RNA(n) + a ribonucleoside 5'-triphosphate = RNA(n+1) + diphosphate. It catalyses the reaction ATP + H2O = ADP + phosphate + H(+). In terms of biological role, assembles with VP1 and VP2 to form an icosahedral capsid. VP1 is about 5 time more abundant than VP1-FSD in the virion. Its function is as follows. Assembles with VP1 and VP1-FSD to form an icosahedral capsid. Replicates genomic and antigenomic RNA. This chain is Polyprotein-FSD, found in Solenopsis invicta (Red imported fire ant).